The chain runs to 151 residues: 3-hydroxyacyl-[acyl-carrier-protein] dehydratase FabZ (151 aa).

Residue His-57 is part of the active site.

Belongs to the thioester dehydratase family. FabZ subfamily.

It is found in the cytoplasm. The catalysed reaction is a (3R)-hydroxyacyl-[ACP] = a (2E)-enoyl-[ACP] + H2O. Functionally, involved in unsaturated fatty acids biosynthesis. Catalyzes the dehydration of short chain beta-hydroxyacyl-ACPs and long chain saturated and unsaturated beta-hydroxyacyl-ACPs. The sequence is that of 3-hydroxyacyl-[acyl-carrier-protein] dehydratase FabZ from Prochlorococcus marinus (strain SARG / CCMP1375 / SS120).